A 468-amino-acid chain; its full sequence is Probable Xaa-Pro aminopeptidase pepP (468 aa).

Mn(2+)-binding residues include D265, D276, E399, and E439.

Belongs to the peptidase M24B family. Mn(2+) is required as a cofactor.

The catalysed reaction is Release of any N-terminal amino acid, including proline, that is linked to proline, even from a dipeptide or tripeptide.. Its function is as follows. Catalyzes the removal of a penultimate prolyl residue from the N-termini of peptides. The sequence is that of Probable Xaa-Pro aminopeptidase pepP (pepP) from Aspergillus fumigatus (strain CBS 144.89 / FGSC A1163 / CEA10) (Neosartorya fumigata).